Here is a 457-residue protein sequence, read N- to C-terminus: PDZ and LIM domain protein 7 (457 aa).

Positions 1 to 85 (MDSFKVVLEG…RLSLGLSRAQ (85 aa)) constitute a PDZ domain. Position 78 is a phosphoserine (Ser-78). 2 disordered regions span residues 81 to 132 (LSRA…LSQN) and 186 to 226 (FMKK…PWAV). Thr-96 is subject to Phosphothreonine. Arg-103 carries the asymmetric dimethylarginine modification. Position 111 is a phosphoserine (Ser-111). Ser-247 carries the post-translational modification Phosphoserine. LIM zinc-binding domains lie at 280–338 (PVCH…VRYA), 339–398 (PSCA…MFGT), and 399–457 (KCRG…FSHV).

In terms of assembly, binds via its LIM zinc-binding 3 domain (LIM 3) domain to endocytic codes of INSR, but not with those of IGF1R, LDLR, TFRC, or EGFR. Interacts with various PKC isoforms through the LIM zinc-binding domains. Binds to RET in a phosphorylation-independent manner via its LIM zinc-binding 2 domain (LIM 2). Probably part of a complex with SHC and the RET dimer. Interacts with TPM2, TBX4 and TBX5. Interacts (via LIM domains) with SIPA1L1. In terms of tissue distribution, expressed in kidney, heart, brain, lung, and skeletal muscle. Overexpression results in the synthesis of an unidentified soluble factor which acts on cells in the osteoblast lineage causing them to differentiate and secrete BMP-2.

It localises to the cytoplasm. It is found in the cytoskeleton. May function as a scaffold on which the coordinated assembly of proteins can occur. May play a role as an adapter that, via its PDZ domain, localizes LIM-binding proteins to actin filaments of both skeletal muscle and nonmuscle tissues. Involved in both of the two fundamental mechanisms of bone formation, direct bone formation (e.g. embryonic flat bones mandible and cranium), and endochondral bone formation (e.g. embryonic long bone development). Plays a role during fracture repair. Involved in BMP6 signaling pathway. This is PDZ and LIM domain protein 7 (Pdlim7) from Rattus norvegicus (Rat).